We begin with the raw amino-acid sequence, 150 residues long: Small heat shock protein HspE (150 aa).

One can recognise a sHSP domain in the interval 27–137; sequence VDNGDTYPPY…KPRQIAIDVA (111 aa).

This sequence belongs to the small heat shock protein (HSP20) family.

The sequence is that of Small heat shock protein HspE (hspE) from Bradyrhizobium diazoefficiens (strain JCM 10833 / BCRC 13528 / IAM 13628 / NBRC 14792 / USDA 110).